A 117-amino-acid chain; its full sequence is Big defensin (117 aa).

An N-terminal signal peptide occupies residues Met-1–Ala-23. Residues Val-24 to Glu-33 constitute a propeptide that is removed on maturation. 3 disulfides stabilise this stretch: Cys-82–Cys-112, Cys-89–Cys-107, and Cys-93–Cys-113.

This sequence belongs to the big defensin family.

Its subcellular location is the secreted. Its function is as follows. Significantly inhibits the growth of Gram-negative and Gram-positive bacteria and fungi in vitro. In Branchiostoma belcheri (Amphioxus), this protein is Big defensin.